Here is a 183-residue protein sequence, read N- to C-terminus: Negative modulator of initiation of replication (183 aa).

A disordered region spans residues 43 to 70 (VNDTQPVSAPAPSKAAPSAGNESRPQDR). Positions 50-61 (SAPAPSKAAPSA) are enriched in low complexity. Interaction with DNA regions lie at residues 89–90 (AV), 118–122 (RTRIY), and 152–158 (NTNTGRK).

Belongs to the SeqA family. As to quaternary structure, homodimer. Polymerizes to form helical filaments.

It is found in the cytoplasm. In terms of biological role, negative regulator of replication initiation, which contributes to regulation of DNA replication and ensures that replication initiation occurs exactly once per chromosome per cell cycle. Binds to pairs of hemimethylated GATC sequences in the oriC region, thus preventing assembly of replication proteins and re-initiation at newly replicated origins. Repression is relieved when the region becomes fully methylated. This is Negative modulator of initiation of replication from Pantoea ananatis (strain AJ13355).